The chain runs to 378 residues: Interleukin-3 receptor subunit alpha (378 aa).

A signal peptide spans methionine 1–glutamine 18. Residues threonine 19 to arginine 305 lie on the Extracellular side of the membrane. N-linked (GlcNAc...) asparagine glycosylation is found at asparagine 46, asparagine 64, asparagine 80, and asparagine 109. Cystine bridges form between cysteine 52/cysteine 68, cysteine 76/cysteine 195, cysteine 112/cysteine 122, and cysteine 151/cysteine 165. 2 N-linked (GlcNAc...) asparagine glycosylation sites follow: asparagine 212 and asparagine 218. The cysteines at positions 217 and 293 are disulfide-linked. The short motif at leucine 282–serine 286 is the WSXWS motif element. A helical transmembrane segment spans residues threonine 306–cysteine 325. At arginine 326 to threonine 378 the chain is on the cytoplasmic side. The Box 1 motif signature appears at leucine 334–lysine 342.

Belongs to the type I cytokine receptor family. Type 5 subfamily. Interacts with IL3. Heterodimer of an alpha and a beta subunit. The beta subunit is common to the IL3, IL5 and GM-CSF receptors. Ubiquitinated by RNFT2 in response to IL3. Ubiquitination leads ligand-induced degradation by the proteasome. Ubiquitinated by RNF128 via 'Lys-27'-linked polyubiquitination, facilitating its degradation through the lysosomal pathway.

It is found in the cell membrane. Its function is as follows. Cell surface receptor for IL3 expressed on hematopoietic progenitor cells, monocytes and B-lymphocytes that controls the production and differentiation of hematopoietic progenitor cells into lineage-restricted cells. Ligand stimulation rapidly induces hetrodimerization with IL3RB, phosphorylation and enzyme activity of effector proteins such as JAK2 and PI3K that play a role in signaling cell proliferation and differentiation. Activation of JAK2 leads to STAT5-mediated transcriptional program. The polypeptide is Interleukin-3 receptor subunit alpha (Homo sapiens (Human)).